Here is an 89-residue protein sequence, read N- to C-terminus: Small ribosomal subunit protein bS20 (89 aa).

The protein belongs to the bacterial ribosomal protein bS20 family.

Its function is as follows. Binds directly to 16S ribosomal RNA. The protein is Small ribosomal subunit protein bS20 of Stenotrophomonas maltophilia (strain R551-3).